The following is a 374-amino-acid chain: Peptide chain release factor 2 (374 aa).

An N5-methylglutamine modification is found at glutamine 248.

It belongs to the prokaryotic/mitochondrial release factor family. Post-translationally, methylated by PrmC. Methylation increases the termination efficiency of RF2.

The protein localises to the cytoplasm. Functionally, peptide chain release factor 2 directs the termination of translation in response to the peptide chain termination codons UGA and UAA. The chain is Peptide chain release factor 2 from Thermomicrobium roseum (strain ATCC 27502 / DSM 5159 / P-2).